The following is a 618-amino-acid chain: Dihydroxy-acid dehydratase (618 aa).

A Mg(2+)-binding site is contributed by aspartate 81. Cysteine 122 is a binding site for [2Fe-2S] cluster. Positions 123 and 124 each coordinate Mg(2+). An N6-carboxylysine modification is found at lysine 124. Position 195 (cysteine 195) interacts with [2Fe-2S] cluster. Glutamate 492 is a Mg(2+) binding site. Serine 518 functions as the Proton acceptor in the catalytic mechanism.

It belongs to the IlvD/Edd family. In terms of assembly, homodimer. [2Fe-2S] cluster is required as a cofactor. Mg(2+) serves as cofactor.

It carries out the reaction (2R)-2,3-dihydroxy-3-methylbutanoate = 3-methyl-2-oxobutanoate + H2O. It catalyses the reaction (2R,3R)-2,3-dihydroxy-3-methylpentanoate = (S)-3-methyl-2-oxopentanoate + H2O. The protein operates within amino-acid biosynthesis; L-isoleucine biosynthesis; L-isoleucine from 2-oxobutanoate: step 3/4. It functions in the pathway amino-acid biosynthesis; L-valine biosynthesis; L-valine from pyruvate: step 3/4. Functions in the biosynthesis of branched-chain amino acids. Catalyzes the dehydration of (2R,3R)-2,3-dihydroxy-3-methylpentanoate (2,3-dihydroxy-3-methylvalerate) into 2-oxo-3-methylpentanoate (2-oxo-3-methylvalerate) and of (2R)-2,3-dihydroxy-3-methylbutanoate (2,3-dihydroxyisovalerate) into 2-oxo-3-methylbutanoate (2-oxoisovalerate), the penultimate precursor to L-isoleucine and L-valine, respectively. The protein is Dihydroxy-acid dehydratase of Zymomonas mobilis subsp. mobilis (strain ATCC 31821 / ZM4 / CP4).